A 223-amino-acid polypeptide reads, in one-letter code: MRPLGKGLLPAEELIRSNLGVGRSLRDCLSQSGKLAEELGSKRLKPAKFGTEGKERVEQRTERQRTGSSKEPRMQIICRRRWREPPPRLLWGCLMPRAQPLLHVTAYENTGHWERLASVVSSKTQQPTVISHSSISITFSHYPPATLDSFLVLEPIKLFPVSSLRSPLCLNCGSCRESIRISGELIGNAHSPAPPRTPELETLGWDKQAVLSGAQVILVCAEV.

The segment at glycine 40–lysine 70 is disordered. A compositionally biased stretch (basic and acidic residues) spans threonine 51–lysine 70.

This is an uncharacterized protein from Homo sapiens (Human).